The sequence spans 410 residues: Glycylpeptide N-tetradecanoyltransferase (410 aa).

Residues Phe-30, Trp-31, Phe-162, Leu-163, Cys-164, Val-165, Ser-171, Arg-173, Leu-174, and Ala-175 each coordinate tetradecanoyl-CoA.

Belongs to the NMT family. As to quaternary structure, heterodimer composed of NMT and AK2; AK2 myristoylation stabilizes the complex.

It is found in the cytoplasm. It carries out the reaction N-terminal glycyl-[protein] + tetradecanoyl-CoA = N-tetradecanoylglycyl-[protein] + CoA + H(+). In terms of biological role, adds a myristoyl group to the N-terminal glycine residue of certain cellular proteins. Myristoylates adenylate kinase AK2. During the asexual blood stage, may myristoylate proteins such as ARO, CDPK1 and GAP45. Probably by mediating protein myristoylation, plays a role in the assembly of the inner membrane complex during the early stages of schizogony and in the formation of rhoptries in the late stages and thus merozoite egress. In Plasmodium falciparum (isolate 3D7), this protein is Glycylpeptide N-tetradecanoyltransferase.